We begin with the raw amino-acid sequence, 312 residues long: DNA-directed RNA polymerase subunit alpha (312 aa).

Residues 1-226 (MIEFEKPRIE…EHLDIFVNLT (226 aa)) are alpha N-terminal domain (alpha-NTD). Residues 243-312 (KEKMLEMTIE…DLGLGLRKDD (70 aa)) are alpha C-terminal domain (alpha-CTD).

Belongs to the RNA polymerase alpha chain family. In terms of assembly, homodimer. The RNAP catalytic core consists of 2 alpha, 1 beta, 1 beta' and 1 omega subunit. When a sigma factor is associated with the core the holoenzyme is formed, which can initiate transcription.

It catalyses the reaction RNA(n) + a ribonucleoside 5'-triphosphate = RNA(n+1) + diphosphate. In terms of biological role, DNA-dependent RNA polymerase catalyzes the transcription of DNA into RNA using the four ribonucleoside triphosphates as substrates. The sequence is that of DNA-directed RNA polymerase subunit alpha from Enterococcus faecalis (strain ATCC 700802 / V583).